A 190-amino-acid chain; its full sequence is Putative resolvase R80 (190 aa).

A DNA-binding region (H-T-H motif) is located at residues Ser11–Ile30. The Resolvase/invertase-type recombinase catalytic domain maps to Leu61 to Lys190. Residues Arg67–Thr92 are a coiled coil. Ser69 serves as the catalytic O-(5'-phospho-DNA)-serine intermediate.

Belongs to the site-specific recombinase resolvase family.

Resolvase catalyzes the resolution (a site-specific recombination) of the cointegrated replicon to yield the final transposition products. The sequence is that of Putative resolvase R80 from Acanthamoeba polyphaga mimivirus (APMV).